A 70-amino-acid polypeptide reads, in one-letter code: Small ribosomal subunit protein bS21B (70 aa).

The protein belongs to the bacterial ribosomal protein bS21 family.

The polypeptide is Small ribosomal subunit protein bS21B (Paraburkholderia xenovorans (strain LB400)).